A 154-amino-acid polypeptide reads, in one-letter code: Urease accessory protein UreE (154 aa).

This sequence belongs to the UreE family.

It is found in the cytoplasm. In terms of biological role, involved in urease metallocenter assembly. Binds nickel. Probably functions as a nickel donor during metallocenter assembly. This chain is Urease accessory protein UreE, found in Escherichia coli O157:H7.